Here is a 156-residue protein sequence, read N- to C-terminus: RNA polymerase sigma factor SigS (156 aa).

Residues 29-44 (EYYQLLLIKMWQLSQI) carry the Polymerase core binding motif. Residues 126-145 (QFEIAEIMSLSLSTIKLIKM) constitute a DNA-binding region (H-T-H motif).

Belongs to the sigma-70 factor family.

Sigma factors are initiation factors that promote the attachment of RNA polymerase to specific initiation sites and are then released. Sigma-S contributes to the protection against external stress, thus playing a role in cellular fitness and survival. The polypeptide is RNA polymerase sigma factor SigS (sigS) (Staphylococcus aureus (strain Mu50 / ATCC 700699)).